The following is a 37-amino-acid chain: Large ribosomal subunit protein bL36 (37 aa).

This sequence belongs to the bacterial ribosomal protein bL36 family.

In Solidesulfovibrio magneticus (strain ATCC 700980 / DSM 13731 / RS-1) (Desulfovibrio magneticus), this protein is Large ribosomal subunit protein bL36.